An 84-amino-acid polypeptide reads, in one-letter code: Mitochondrial import inner membrane translocase subunit Tim9 (84 aa).

The short motif at 36–60 (CFQSCITNFRIRKLDDEEQLCVYKC) is the Twin CX3C motif element. 2 disulfide bridges follow: C36/C60 and C40/C56.

The protein belongs to the small Tim family. Heterohexamer; composed of 3 copies of timm9 and 3 copies of timm10, named soluble 70 kDa complex. Associates directly with the TIM22 complex, whose core is composed of timm22. Interacts with the transmembrane regions of multi-pass transmembrane proteins in transit.

The protein localises to the mitochondrion inner membrane. In terms of biological role, component of the TIM22 complex, a complex that mediates the import and insertion of multi-pass transmembrane proteins into the mitochondrial inner membrane. The TIM22 complex forms a twin-pore translocase that uses the membrane potential as external driving force. The sequence is that of Mitochondrial import inner membrane translocase subunit Tim9 (timm9) from Dictyostelium discoideum (Social amoeba).